Consider the following 64-residue polypeptide: Putative neurotoxin-H (64 aa).

Residues 1-19 (MYATVTVTVLLLISSGIFC) form the signal peptide. Intrachain disulfides connect C25–C45, C32–C54, and C36–C56.

In terms of tissue distribution, expressed by the venom gland.

It localises to the secreted. This chain is Putative neurotoxin-H, found in Lychas mucronatus (Chinese swimming scorpion).